Here is a 366-residue protein sequence, read N- to C-terminus: Proline-rich protein 19 (366 aa).

Disordered regions lie at residues 1–53 (MDPR…RDPC), 102–149 (ESHT…DLPV), 256–286 (TPAH…AAWG), and 301–338 (ATPP…WSPN). The segment covering 18–29 (GRIRRRKTRRER) has biased composition (basic residues). 2 stretches are compositionally biased toward polar residues: residues 104 to 113 (HTPQLPTKPS) and 256 to 265 (TPAHRGSQVQ). The span at 275 to 286 (SSASSPSGAAWG) shows a compositional bias: low complexity. Over residues 302–326 (TPPPPPPQPWDVRPPQPLPQPPSPL) the composition is skewed to pro residues.

In terms of assembly, interacts with CNTD1. In terms of tissue distribution, preferentially expressed in gonads.

The protein resides in the nucleus. It localises to the chromosome. In terms of biological role, promotes meiotic crossing over formation through its interaction with CNTD1 by participating in the crossover differentiation step of crossover-specific recombination intermediates. The protein is Proline-rich protein 19 of Mus musculus (Mouse).